The primary structure comprises 243 residues: Putative C-type lectin protein A7 (243 aa).

Residues 23 to 43 (IFFILAATNLMIAAFALGCLA) form a helical membrane-spanning segment. The region spanning 116–223 (GQKACYYVPP…CTTSKLCLCG (108 aa)) is the C-type lectin domain. 2 cysteine pairs are disulfide-bonded: Cys-137/Cys-222 and Cys-198/Cys-214.

The protein localises to the host membrane. In Alcelaphine herpesvirus 1 (strain C500) (AlHV-1), this protein is Putative C-type lectin protein A7 (A7).